We begin with the raw amino-acid sequence, 226 residues long: Large ribosomal subunit protein uL1 (226 aa).

The protein belongs to the universal ribosomal protein uL1 family. As to quaternary structure, part of the 50S ribosomal subunit.

Binds directly to 23S rRNA. The L1 stalk is quite mobile in the ribosome, and is involved in E site tRNA release. Its function is as follows. Protein L1 is also a translational repressor protein, it controls the translation of the L11 operon by binding to its mRNA. This is Large ribosomal subunit protein uL1 from Mycoplasma genitalium (strain ATCC 33530 / DSM 19775 / NCTC 10195 / G37) (Mycoplasmoides genitalium).